Reading from the N-terminus, the 399-residue chain is Nicotinate phosphoribosyltransferase (399 aa).

A Phosphohistidine; by autocatalysis modification is found at His-217.

This sequence belongs to the NAPRTase family. In terms of processing, transiently phosphorylated on a His residue during the reaction cycle. Phosphorylation strongly increases the affinity for substrates and increases the rate of nicotinate D-ribonucleotide production. Dephosphorylation regenerates the low-affinity form of the enzyme, leading to product release.

The enzyme catalyses nicotinate + 5-phospho-alpha-D-ribose 1-diphosphate + ATP + H2O = nicotinate beta-D-ribonucleotide + ADP + phosphate + diphosphate. Its pathway is cofactor biosynthesis; NAD(+) biosynthesis; nicotinate D-ribonucleotide from nicotinate: step 1/1. In terms of biological role, catalyzes the synthesis of beta-nicotinate D-ribonucleotide from nicotinate and 5-phospho-D-ribose 1-phosphate at the expense of ATP. The polypeptide is Nicotinate phosphoribosyltransferase (Burkholderia orbicola (strain MC0-3)).